A 214-amino-acid polypeptide reads, in one-letter code: Thiamine import ATP-binding protein ThiQ (214 aa).

An ABC transporter domain is found at 2–212 (IKLNTIFDYP…KNGQATEREI (211 aa)). Residue 31–38 (GESGAGKS) participates in ATP binding.

Belongs to the ABC transporter superfamily. Thiamine importer (TC 3.A.1.19.1) family. In terms of assembly, the complex is composed of two ATP-binding proteins (ThiQ), two transmembrane proteins (ThiP) and a solute-binding protein (ThiB).

Its subcellular location is the cell inner membrane. It carries out the reaction thiamine(out) + ATP + H2O = thiamine(in) + ADP + phosphate + H(+). In terms of biological role, part of the ABC transporter complex ThiBPQ involved in thiamine import. Responsible for energy coupling to the transport system. The protein is Thiamine import ATP-binding protein ThiQ of Histophilus somni (strain 129Pt) (Haemophilus somnus).